Reading from the N-terminus, the 501-residue chain is Cytochrome P450 monooxygenase 76AD131 (501 aa).

The helical transmembrane segment at 1-21 (MGYYAIFAVVLPFLWTCFYLL) threads the bilayer. Residues Asn115 and Asn264 are each glycosylated (N-linked (GlcNAc...) asparagine). Cys444 provides a ligand contact to heme.

The protein belongs to the cytochrome P450 family. The cofactor is heme. Highly expressed in aerial parts, in both skin and flesh tissues.

It is found in the membrane. It carries out the reaction tyramine + reduced [NADPH--hemoprotein reductase] + O2 = dopamine + oxidized [NADPH--hemoprotein reductase] + H2O + H(+). It catalyses the reaction 3-methoxytyramine + reduced [NADPH--hemoprotein reductase] + O2 = 3,4-dihydroxy-5-methoxyphenethylamine + oxidized [NADPH--hemoprotein reductase] + H2O + H(+). It functions in the pathway aromatic compound metabolism. Its pathway is alkaloid biosynthesis. Its function is as follows. Cytochrome P450 monooxygenase participating in the biosynthesis of natural products derived from phenylethylamine, including mescaline, a natural hallucinogen potentially used in psychotherapeutic treatments. Catalyzes the hydroxylation of tyramine to dopamine and of 3-methoxytyramine to 3,4-dihydroxy-5-methoxyphenethylamine. The sequence is that of Cytochrome P450 monooxygenase 76AD131 from Lophophora williamsii (Peyote).